We begin with the raw amino-acid sequence, 145 residues long: Large ribosomal subunit protein uL14m (145 aa).

A mitochondrion-targeting transit peptide spans 1–30 (MAFSSGLWGPCVHMSRAFSQRCFSTTGSLG).

It belongs to the universal ribosomal protein uL14 family. As to quaternary structure, component of the mitochondrial ribosome large subunit (39S) which comprises a 16S rRNA and about 50 distinct proteins. Interacts with MALSU1.

The protein resides in the mitochondrion. May form part of 2 intersubunit bridges in the assembled ribosome. Upon binding to MALSU1, intersubunit bridge formation is blocked, preventing ribosome formation and repressing translation. The protein is Large ribosomal subunit protein uL14m (MRPL14) of Bos taurus (Bovine).